Here is a 189-residue protein sequence, read N- to C-terminus: PTS system glucose-specific EIIA component (189 aa).

The PTS EIIA type-1 domain maps to 31–135 (DEAFAEKIVG…SVITPVVIAN (105 aa)). Positions 68 and 83 each coordinate Zn(2+). Residue His83 is the Tele-phosphohistidine intermediate; for EIIA activity of the active site. His83 is modified (phosphohistidine; by HPr).

Heterodimer with glycerol kinase (glpk). Requires Zn(2+) as cofactor.

The protein localises to the cytoplasm. The phosphoenolpyruvate-dependent sugar phosphotransferase system (sugar PTS), a major carbohydrate active transport system, catalyzes the phosphorylation of incoming sugar substrates concomitantly with their translocation across the cell membrane. The enzyme II complex composed of PtsG and Crr is involved in glucose transport. This chain is PTS system glucose-specific EIIA component (crr), found in Borreliella burgdorferi (strain ATCC 35210 / DSM 4680 / CIP 102532 / B31) (Borrelia burgdorferi).